Reading from the N-terminus, the 416-residue chain is Creatine kinase U-type, mitochondrial (416 aa).

The N-terminal 39 residues, 1–39 (MAGPFSRLLSARPGLRLLALAGAGSLAAGFLLRPEPIRA), are a transit peptide targeting the mitochondrion. The segment at 40–63 (ASERRRQYPPSAEYPDLRKHNNCM) is cardiolipin-binding. The Phosphagen kinase N-terminal domain maps to 44–131 (RRQYPPSAEY…FDPVIQERHN (88 aa)). S151 carries the phosphoserine modification. The region spanning 158-400 (YVLSSRVRTG…NYLIDCERRL (243 aa)) is the Phosphagen kinase C-terminal domain. Position 161–165 (161–165 (SSRVR)) interacts with ATP. Residue S196 is modified to Phosphoserine. Phosphothreonine is present on T213. Residue H224 participates in ATP binding. At S232 the chain carries Phosphoserine. ATP-binding positions include R269, R325, and 353–358 (RGTGGV). Phosphothreonine is present on T355. A Phosphoserine modification is found at S365. ATP is bound at residue D368.

Belongs to the ATP:guanido phosphotransferase family. As to quaternary structure, exists as an octamer composed of four MTCK homodimers.

It is found in the mitochondrion inner membrane. It catalyses the reaction creatine + ATP = N-phosphocreatine + ADP + H(+). Its function is as follows. Reversibly catalyzes the transfer of phosphate between ATP and various phosphogens (e.g. creatine phosphate). Creatine kinase isoenzymes play a central role in energy transduction in tissues with large, fluctuating energy demands, such as skeletal muscle, heart, brain and spermatozoa. This is Creatine kinase U-type, mitochondrial (CKMT1) from Sus scrofa (Pig).